The sequence spans 637 residues: MLLSELSHPNQLHGLTVSQLEEIACQIRERHLEVVSTSGGHLGPGLGVVELTLALYQTLDLDFDKVVWDVGHQAYPHKLITGRFNEFDSLRQQKGIAGYLKRSESHFDHFGAGHASTSISAALGMAIARDRKGEDHKCVAVIGDGALTGGMALEAINHAGHLPNTPLVVVLNDNDMSISPPVGALSTYLNRVRLSPPLQFLSDSVQESVKNIPLIGKDIPEELKNIKGSVRRLAVPKVGAVFEELGFTYMGPIDGHDISNLINTFNAAHRLKKPVMVHVVTTKGKGYPYAEADQVGYHAQSSFDLTTGKSIPSSKPKPVSYSKIFGQTLLKICEQDSKVIGITAAMATGTGLDLLQKNIPEQYIDVGIAEQHAVTLAAGMSCDGLKPVVAIYSTFLQRAFDQLIHDVGIQNLPVSFVLDRAGIVGADGPTHQGQYDISYMRAIPNFVLMAPKDEAELQRMLITSINYKGPTALRIPRGSGLGVAVMDEGWEPLKIGEGEILEEGDDVLIIAYGSMVQSATETANLLKNRGISACIINARFVRPLDQDLIIPLVRKLKKVVTMEEGTLVGGFGSAIVEMLNDNDINIPVLRIGIPDVLVDHASPDQSKEKLGLTPDQMAEKIINKFNLAKLNSKITVE.

Thiamine diphosphate contacts are provided by residues His-72 and 113–115 (GHA). Asp-144 is a binding site for Mg(2+). Residues 145–146 (GA), Asn-174, Tyr-287, and Glu-370 contribute to the thiamine diphosphate site. Asn-174 lines the Mg(2+) pocket.

This sequence belongs to the transketolase family. DXPS subfamily. Homodimer. Requires Mg(2+) as cofactor. The cofactor is thiamine diphosphate.

The catalysed reaction is D-glyceraldehyde 3-phosphate + pyruvate + H(+) = 1-deoxy-D-xylulose 5-phosphate + CO2. It participates in metabolic intermediate biosynthesis; 1-deoxy-D-xylulose 5-phosphate biosynthesis; 1-deoxy-D-xylulose 5-phosphate from D-glyceraldehyde 3-phosphate and pyruvate: step 1/1. Catalyzes the acyloin condensation reaction between C atoms 2 and 3 of pyruvate and glyceraldehyde 3-phosphate to yield 1-deoxy-D-xylulose-5-phosphate (DXP). This chain is 1-deoxy-D-xylulose-5-phosphate synthase, found in Prochlorococcus marinus subsp. pastoris (strain CCMP1986 / NIES-2087 / MED4).